A 182-amino-acid chain; its full sequence is Large ribosomal subunit protein uL10 (182 aa).

The protein belongs to the universal ribosomal protein uL10 family. As to quaternary structure, part of the ribosomal stalk of the 50S ribosomal subunit. The N-terminus interacts with L11 and the large rRNA to form the base of the stalk. The C-terminus forms an elongated spine to which L12 dimers bind in a sequential fashion forming a multimeric L10(L12)X complex.

In terms of biological role, forms part of the ribosomal stalk, playing a central role in the interaction of the ribosome with GTP-bound translation factors. The protein is Large ribosomal subunit protein uL10 of Koribacter versatilis (strain Ellin345).